The sequence spans 296 residues: Elongation factor Ts (296 aa).

Positions 82–85 are involved in Mg(2+) ion dislocation from EF-Tu; the sequence is TDFV.

Belongs to the EF-Ts family.

Its subcellular location is the cytoplasm. Its function is as follows. Associates with the EF-Tu.GDP complex and induces the exchange of GDP to GTP. It remains bound to the aminoacyl-tRNA.EF-Tu.GTP complex up to the GTP hydrolysis stage on the ribosome. The protein is Elongation factor Ts of Aromatoleum aromaticum (strain DSM 19018 / LMG 30748 / EbN1) (Azoarcus sp. (strain EbN1)).